We begin with the raw amino-acid sequence, 872 residues long: DNA mismatch repair protein MutS (872 aa).

Residue 602-609 coordinates ATP; that stretch reads GPNMSGKS.

It belongs to the DNA mismatch repair MutS family.

Functionally, this protein is involved in the repair of mismatches in DNA. It is possible that it carries out the mismatch recognition step. This protein has a weak ATPase activity. This is DNA mismatch repair protein MutS from Staphylococcus aureus (strain Mu3 / ATCC 700698).